Consider the following 254-residue polypeptide: Phosphatidylglycerol--prolipoprotein diacylglyceryl transferase (254 aa).

The next 4 helical transmembrane spans lie at leucine 11–alanine 31, phenylalanine 49–phenylalanine 69, glutamine 84–leucine 104, and glutamate 109–glycine 129. An a 1,2-diacyl-sn-glycero-3-phospho-(1'-sn-glycerol)-binding site is contributed by arginine 130. Helical transmembrane passes span proline 169–leucine 189, glycine 196–leucine 216, and valine 228–isoleucine 248.

It belongs to the Lgt family.

It is found in the cell membrane. The catalysed reaction is L-cysteinyl-[prolipoprotein] + a 1,2-diacyl-sn-glycero-3-phospho-(1'-sn-glycerol) = an S-1,2-diacyl-sn-glyceryl-L-cysteinyl-[prolipoprotein] + sn-glycerol 1-phosphate + H(+). Its pathway is protein modification; lipoprotein biosynthesis (diacylglyceryl transfer). Catalyzes the transfer of the diacylglyceryl group from phosphatidylglycerol to the sulfhydryl group of the N-terminal cysteine of a prolipoprotein, the first step in the formation of mature lipoproteins. The protein is Phosphatidylglycerol--prolipoprotein diacylglyceryl transferase of Clostridium botulinum (strain Langeland / NCTC 10281 / Type F).